Reading from the N-terminus, the 100-residue chain is Cell division protein FtsB (100 aa).

Residues 1-3 (MKW) are Cytoplasmic-facing. Residues 4-21 (LAIILVVALLALQYRLWM) form a helical membrane-spanning segment. The Periplasmic segment spans residues 22-100 (GEGSIASVVS…TDKDTKKNKK (79 aa)). Residues 26-73 (IASVVSLNREIAKQKEENARLRERNRLLAAEVDALKQGKDAIEERARN) are a coiled coil.

This sequence belongs to the FtsB family. In terms of assembly, part of a complex composed of FtsB, FtsL and FtsQ.

It localises to the cell inner membrane. Its function is as follows. Essential cell division protein. May link together the upstream cell division proteins, which are predominantly cytoplasmic, with the downstream cell division proteins, which are predominantly periplasmic. This Saccharophagus degradans (strain 2-40 / ATCC 43961 / DSM 17024) protein is Cell division protein FtsB.